The sequence spans 1416 residues: DNA-directed RNA polymerase subunit beta' (1416 aa).

Residues C71, C73, C86, and C89 each contribute to the Zn(2+) site. Mg(2+) contacts are provided by D461, D463, and D465. The Zn(2+) site is built by C815, C892, C899, and C902.

It belongs to the RNA polymerase beta' chain family. The RNAP catalytic core consists of 2 alpha, 1 beta, 1 beta' and 1 omega subunit. When a sigma factor is associated with the core the holoenzyme is formed, which can initiate transcription. Mg(2+) is required as a cofactor. Requires Zn(2+) as cofactor.

The enzyme catalyses RNA(n) + a ribonucleoside 5'-triphosphate = RNA(n+1) + diphosphate. DNA-dependent RNA polymerase catalyzes the transcription of DNA into RNA using the four ribonucleoside triphosphates as substrates. This chain is DNA-directed RNA polymerase subunit beta', found in Blochmanniella pennsylvanica (strain BPEN).